The chain runs to 291 residues: NAD kinase (291 aa).

Catalysis depends on Asp-73, which acts as the Proton acceptor. NAD(+) is bound by residues 73–74 (DG), 147–148 (ND), Arg-175, Asp-177, 188–193 (TAYALS), Ala-212, and Gln-246.

This sequence belongs to the NAD kinase family. Requires a divalent metal cation as cofactor.

It localises to the cytoplasm. It catalyses the reaction NAD(+) + ATP = ADP + NADP(+) + H(+). In terms of biological role, involved in the regulation of the intracellular balance of NAD and NADP, and is a key enzyme in the biosynthesis of NADP. Catalyzes specifically the phosphorylation on 2'-hydroxyl of the adenosine moiety of NAD to yield NADP. This chain is NAD kinase, found in Polaromonas naphthalenivorans (strain CJ2).